Here is a 481-residue protein sequence, read N- to C-terminus: CASP8 and FADD-like apoptosis regulator (481 aa).

DED domains follow at residues 6 to 78 (VSAE…RILK) and 97 to 172 (DYRV…LNTK). The interval 6-200 (VSAEVIHQVE…QASLPKLSIK (195 aa)) is interaction with CASP8. The tract at residues 6-229 (VSAEVIHQVE…DSQRTLVKTS (224 aa)) is interaction with FADD. The tract at residues 6 to 307 (VSAEVIHQVE…YASMAQHQDY (302 aa)) is interaction with CASP8 propeptide. Positions 197–436 (LSIKYNSRLQ…KLSQQLKQGR (240 aa)) are interaction with CASP3. Residues 197-481 (LSIKYNSRLQ…LRKKLILAPT (285 aa)) form an interaction with TRAF1 and TRAF2 region. The interval 219–481 (RDSQRTLVKT…LRKKLILAPT (263 aa)) is interaction with CASP8 subunits p18 and p10. Residues 265-360 (DTKYLQETFT…RGKPKLFFIQ (96 aa)) form a caspase region. The interval 372–481 (SSLEVDGPSI…LRKKLILAPT (110 aa)) is interaction with CASP8.

The protein belongs to the peptidase C14A family. In terms of assembly, TNFRSF6 stimulation triggers recruitment to the death-inducing signaling complex (DISC) formed by TNFRSF6, FADD and CASP8. A proteolytic fragment (p43) stays associated with the DISC. Interacts with RIPK1. In terms of processing, proteolytically processed by CASP8 generating subunits p43 and p12. As to expression, highly expressed in heart.

Its function is as follows. Apoptosis regulator protein which may function as a crucial link between cell survival and cell death pathways in mammalian cells. Acts as an inhibitor of TNFRSF6 mediated apoptosis. A proteolytic fragment (p43) is likely retained in the death-inducing signaling complex (DISC) thereby blocking further recruitment and processing of caspase-8 at the complex. Full length and shorter isoforms have been shown either to induce apoptosis or to reduce TNFRSF-triggered apoptosis. Lacks enzymatic (caspase) activity. The sequence is that of CASP8 and FADD-like apoptosis regulator (Cflar) from Mus musculus (Mouse).